The sequence spans 3674 residues: Dystrophin-1 (3674 aa).

The tract at residues methionine 1–proline 25 is disordered. Over residues proline 11–proline 25 the composition is skewed to basic and acidic residues. Residues glutamine 30–asparagine 39 are actin-binding. The region spanning glutamate 129 to isoleucine 234 is the Calponin-homology (CH) domain. Residues serine 265–arginine 325 are disordered. 3 Spectrin repeats span residues glutamate 327 to glutamine 435, glutamine 436 to glycine 541, and cysteine 612 to lysine 656. Positions valine 655–glutamate 674 are enriched in basic and acidic residues. Disordered stretches follow at residues valine 655 to glutamate 689, asparagine 968 to arginine 991, alanine 1587 to serine 1606, leucine 1796 to serine 1833, and methionine 2387 to glycine 2466. Residues glutamine 675–aspartate 685 show a composition bias toward polar residues. The span at threonine 975–arginine 991 shows a compositional bias: basic and acidic residues. Residues leucine 1796–serine 1830 are compositionally biased toward basic and acidic residues. Polar residues predominate over residues glycine 2391–glutamine 2411. 4 Spectrin repeats span residues arginine 2576–alanine 2673, phenylalanine 2725–lysine 2789, glutamine 2792–lysine 2905, and glutamine 2926–asparagine 3032. Residues glutamine 3047–tryptophan 3081 enclose the WW domain. The ZZ-type zinc-finger motif lies at lysine 3301–threonine 3357. Residues cysteine 3306, cysteine 3309, cysteine 3321, cysteine 3324, cysteine 3330, cysteine 3333, histidine 3343, and histidine 3347 each coordinate Zn(2+). Disordered regions lie at residues serine 3481–glutamine 3522 and lysine 3568–asparagine 3645. Over residues lysine 3568–leucine 3579 the composition is skewed to polar residues.

As to quaternary structure, component of the dystrophin glycoprotein complex (DGC). Interacts with dyb-1 and stn-1 to form the DGC. Interacts with stn-2. In terms of tissue distribution, expressed in body wall, head, pharyngeal and vulval muscles, from late embryogenesis to adulthood (at protein level).

It localises to the cell membrane. Its subcellular location is the sarcolemma. The protein localises to the cytoplasm. It is found in the cytoskeleton. Functionally, plays a role in cholinergic transmission and as a functional partner of dystrobrevin (dyb-1), necessary for muscle maintenance. Required for neuronal positioning. May play a role in the localization of slo-1 near dense bodies in the muscle. In Caenorhabditis elegans, this protein is Dystrophin-1 (dys-1).